The chain runs to 286 residues: ATP synthase gamma chain (286 aa).

The protein belongs to the ATPase gamma chain family. F-type ATPases have 2 components, CF(1) - the catalytic core - and CF(0) - the membrane proton channel. CF(1) has five subunits: alpha(3), beta(3), gamma(1), delta(1), epsilon(1). CF(0) has three main subunits: a, b and c.

The protein resides in the cell inner membrane. In terms of biological role, produces ATP from ADP in the presence of a proton gradient across the membrane. The gamma chain is believed to be important in regulating ATPase activity and the flow of protons through the CF(0) complex. This chain is ATP synthase gamma chain, found in Pseudomonas entomophila (strain L48).